The chain runs to 63 residues: Serine protease inhibitor 3 (63 aa).

An N-terminal signal peptide occupies residues 1 to 23; sequence MAKLLAVFLVLLIAALVCEQALA. 3 disulfides stabilise this stretch: Cys-24-Cys-39, Cys-34-Cys-52, and Cys-37-Cys-47. Residues 24 to 55 form the Pacifastin domain; the sequence is CTPGSRKYDGCNWCTCSSGGAWICTLKYCPPS.

Belongs to the protease inhibitor I19 family. In terms of tissue distribution, expressed in hemolymph, ovaries, testes and fat body of adults but are absent in the gut. Also present in larval hemolymph and fat body.

It is found in the secreted. Its function is as follows. In vitro, active against alpha-chymotrypsin. The protein is Serine protease inhibitor 3 of Schistocerca gregaria (Desert locust).